A 79-amino-acid chain; its full sequence is Small integral membrane protein 40 (79 aa).

The chain crosses the membrane as a helical span at residues 35-55; sequence FFIFLALFLTLLMLEAAYKLL.

It localises to the membrane. The polypeptide is Small integral membrane protein 40 (Homo sapiens (Human)).